A 636-amino-acid chain; its full sequence is 1-deoxy-D-xylulose-5-phosphate synthase (636 aa).

Thiamine diphosphate is bound by residues His-72 and 113-115; that span reads GHA. Asp-144 is a Mg(2+) binding site. Residues 145–146, Asn-174, Tyr-287, and Glu-370 each bind thiamine diphosphate; that span reads GS. Asn-174 contacts Mg(2+).

This sequence belongs to the transketolase family. DXPS subfamily. In terms of assembly, homodimer. The cofactor is Mg(2+). Thiamine diphosphate serves as cofactor.

The catalysed reaction is D-glyceraldehyde 3-phosphate + pyruvate + H(+) = 1-deoxy-D-xylulose 5-phosphate + CO2. It participates in metabolic intermediate biosynthesis; 1-deoxy-D-xylulose 5-phosphate biosynthesis; 1-deoxy-D-xylulose 5-phosphate from D-glyceraldehyde 3-phosphate and pyruvate: step 1/1. Functionally, catalyzes the acyloin condensation reaction between C atoms 2 and 3 of pyruvate and glyceraldehyde 3-phosphate to yield 1-deoxy-D-xylulose-5-phosphate (DXP). The chain is 1-deoxy-D-xylulose-5-phosphate synthase from Synechococcus elongatus (strain ATCC 33912 / PCC 7942 / FACHB-805) (Anacystis nidulans R2).